We begin with the raw amino-acid sequence, 669 residues long: Protein fem-1 homolog A (669 aa).

ANK repeat units follow at residues 2-31 (DLRT…REEL), 40-70 (GGGT…SVEA), 82-111 (EGAP…SVNR), 115-145 (TNST…DLEV), 149-178 (HGHT…QVNR), 182-211 (KGNT…RMER), and 214-243 (YGMT…GQEQ). Ser-108 is subject to Phosphoserine. The tract at residues 240–278 (GQEQVAGGEAQPGLPQEDPSTSQGCAQPQGAPCCSSSPE) is disordered. 2 TPR repeats span residues 298-332 (VEAL…RHQG) and 390-423 (SYYI…QQSN). ANK repeat units follow at residues 534 to 576 (NGFT…DPDS) and 580 to 609 (DNNT…HMDA).

The protein belongs to the fem-1 family. As to quaternary structure, component of a CRL2 E3 ubiquitin-protein ligase complex, also named ECS (Elongin BC-CUL2/5-SOCS-box protein) complex, composed of CUL2, Elongin BC (ELOB and ELOC), RBX1 and substrate-specific adapter FEM1A. Interacts with PTGER4. Interacts with NFKB1; the interaction is direct. Phosphorylated; highly phosphorylated in myoblasts and myotubes. Phosphorylation at Ser-108 promotes PGE2-EP4-mediated inhibition of inflammation. Dephosphorylated by protein phosphatase 2A (PP2A). Present in macrophages derived from peripheral blood monocytes. Also present in atheromata (at protein level).

It is found in the mitochondrion. The protein localises to the cytoplasm. It functions in the pathway protein modification; protein ubiquitination. Substrate-recognition component of a Cul2-RING (CRL2) E3 ubiquitin-protein ligase complex of the DesCEND (destruction via C-end degrons) pathway, which recognizes a C-degron located at the extreme C terminus of target proteins, leading to their ubiquitination and degradation. The C-degron recognized by the DesCEND pathway is usually a motif of less than ten residues and can be present in full-length proteins, truncated proteins or proteolytically cleaved forms. The CRL2(FEM1A) complex specifically recognizes proteins with an arginine at the C-terminus: recognizes and binds proteins ending with -Lys/Arg-Xaa-Arg and -Lys/Arg-Xaa-Xaa-Arg C-degrons, such as SIL1 or OR51B2, leading to their ubiquitination and degradation. Promotes ubiquitination and degradation of SLBP. Involved in PGE2-EP4-mediated inhibition of inflammation of macrophages via interaction with NFKB1 and PTGER4. Promotes inflammation in brain microglia through MAP2K4/MKK4-mediated signaling. The sequence is that of Protein fem-1 homolog A from Homo sapiens (Human).